A 354-amino-acid polypeptide reads, in one-letter code: UPF0597 protein PPA0217 (354 aa).

Belongs to the UPF0597 family.

This Cutibacterium acnes (strain DSM 16379 / KPA171202) (Propionibacterium acnes) protein is UPF0597 protein PPA0217.